Consider the following 76-residue polypeptide: MDIVTLAEVAGNLNVVGYGLAAIGPGIGLGILIGKTIESTARQPELGGRLQTLMFLGLAFVEVLALLGFVAAFIFQ.

2 helical membrane-spanning segments follow: residues 13–33 and 55–75; these read LNVV…GILI and FLGL…AFIF.

Belongs to the ATPase C chain family. F-type ATPases have 2 components, F(1) - the catalytic core - and F(0) - the membrane proton channel. F(1) has five subunits: alpha(3), beta(3), gamma(1), delta(1), epsilon(1). F(0) has three main subunits: a(1), b(2) and c(10-14). The alpha and beta chains form an alternating ring which encloses part of the gamma chain. F(1) is attached to F(0) by a central stalk formed by the gamma and epsilon chains, while a peripheral stalk is formed by the delta and b chains.

Its subcellular location is the cell membrane. In terms of biological role, f(1)F(0) ATP synthase produces ATP from ADP in the presence of a proton or sodium gradient. F-type ATPases consist of two structural domains, F(1) containing the extramembraneous catalytic core and F(0) containing the membrane proton channel, linked together by a central stalk and a peripheral stalk. During catalysis, ATP synthesis in the catalytic domain of F(1) is coupled via a rotary mechanism of the central stalk subunits to proton translocation. Functionally, key component of the F(0) channel; it plays a direct role in translocation across the membrane. A homomeric c-ring of between 10-14 subunits forms the central stalk rotor element with the F(1) delta and epsilon subunits. This chain is ATP synthase subunit c, found in Bifidobacterium animalis subsp. lactis (strain AD011).